The chain runs to 396 residues: L-lactate dehydrogenase (396 aa).

The FMN hydroxy acid dehydrogenase domain occupies methionine 1–glycine 380. Substrate is bound at residue tyrosine 24. Residues serine 106 and glutamine 127 each contribute to the FMN site. Tyrosine 129 lines the substrate pocket. Threonine 155 is a binding site for FMN. Arginine 164 is a substrate binding site. Lysine 251 is an FMN binding site. The Proton acceptor role is filled by histidine 275. Arginine 278 provides a ligand contact to substrate. Residue aspartate 306 to arginine 330 coordinates FMN.

The protein belongs to the FMN-dependent alpha-hydroxy acid dehydrogenase family. The cofactor is FMN.

Its subcellular location is the cell inner membrane. The catalysed reaction is (S)-lactate + A = pyruvate + AH2. Its function is as follows. Catalyzes the conversion of L-lactate to pyruvate. Is coupled to the respiratory chain. The chain is L-lactate dehydrogenase from Salmonella enteritidis PT4 (strain P125109).